The following is a 491-amino-acid chain: Trypanothione reductase (491 aa).

An FAD-binding site is contributed by 35 to 52; sequence DVQATHGPPALVALGGTC. C52 and C57 are joined by a disulfide. H461 serves as the catalytic Proton acceptor.

This sequence belongs to the class-I pyridine nucleotide-disulfide oxidoreductase family. Homodimer. The cofactor is FAD.

It localises to the cytoplasm. It carries out the reaction trypanothione + NADP(+) = trypanothione disulfide + NADPH + H(+). Its function is as follows. Trypanothione is the parasite analog of glutathione; this enzyme is the equivalent of glutathione reductase. This is Trypanothione reductase (TPR) from Leishmania donovani.